A 35-amino-acid polypeptide reads, in one-letter code: Sperm protamine alpha isoform 1 (35 aa).

The segment at 1–35 (MPRRRRRASRPVRRRRRARRSTAVRRRRRVVRRRR) is disordered. Phosphoserine occurs at positions 9 and 21.

Phosphorylated in immature sperm. Dephosphorylated in mature sperm allowing a stronger interaction with DNA. Gonads.

Its subcellular location is the nucleus. The protein resides in the chromosome. In terms of biological role, protamines substitute for histones in the chromatin of sperm during the haploid phase of spermatogenesis. They compact sperm DNA into a highly condensed, stable and inactive complex. This is Sperm protamine alpha isoform 1 from Scomber scombrus (Atlantic mackerel).